The primary structure comprises 97 residues: Coiled-coil domain-containing protein 167 (97 aa).

A coiled-coil region spans residues 36-80 (LRKMELTEEGRKSLEKEKSSLSSRLSNYERELKSLRHENRKNMLL). Residues 78-95 (MLLSVAIFLLFAVGYYCW) form a helical membrane-spanning segment.

Its subcellular location is the membrane. This is Coiled-coil domain-containing protein 167 (ccdc167) from Xenopus tropicalis (Western clawed frog).